The chain runs to 113 residues: B-type lectin plumieribetin (113 aa).

Positions 1–109 constitute a Bulb-type lectin domain; that stretch reads NYLSKNDELR…STEIWNSDKN (109 aa).

In terms of assembly, homotetramer. Interacts with alpha-1-beta-1 integrin (ITGA1/ITGB1). In terms of processing, not glycosylated. Not N-glycosylated and not O-glycosylated with the mostcommon O-linked glycoconjugates. Post-translationally, the N-terminus is blocked. Expressed by sting venom glands and is also found in skin mucus. Not found in other tissues tested.

It localises to the secreted. May contribute to some of the local and systemic effects of envenomation by the scorpionfish. Preferentially recognizes mannose-containing carbohydrate structures, but its interaction with single mannose residues is weak. Potently inhibits alpha-1-beta-1 integrin (ITGA1/ITGB1) binding to basement membrane collagen IV in a divalent cation-independent manner. In addition, moderately inhibits both laminin binding integrins alpha-3-beta-1 (ITGA3/ITGB1) and alpha-7-beta-1 (ITGA7/ITGB1). Weakens the cell-collagen contacts, reduces cell spreading, and alters the actin cytoskeleton, after the compensating alpha-2-beta-1 integrin is blocked. On the cellular level, fails to completely detach hepatocarcinoma HepG2 cells and primary arterial smooth muscle cells from the collagen IV fragment CB3. In Scorpaena plumieri (Spotted scorpionfish), this protein is B-type lectin plumieribetin.